The following is a 259-amino-acid chain: Tryptophan synthase alpha chain (259 aa).

Active-site proton acceptor residues include E48 and D59.

Belongs to the TrpA family. In terms of assembly, tetramer of two alpha and two beta chains.

It carries out the reaction (1S,2R)-1-C-(indol-3-yl)glycerol 3-phosphate + L-serine = D-glyceraldehyde 3-phosphate + L-tryptophan + H2O. Its pathway is amino-acid biosynthesis; L-tryptophan biosynthesis; L-tryptophan from chorismate: step 5/5. Its function is as follows. The alpha subunit is responsible for the aldol cleavage of indoleglycerol phosphate to indole and glyceraldehyde 3-phosphate. This chain is Tryptophan synthase alpha chain, found in Syntrophomonas wolfei subsp. wolfei (strain DSM 2245B / Goettingen).